A 296-amino-acid polypeptide reads, in one-letter code: Fructose-bisphosphate aldolase class 1 (296 aa).

Glu-175 functions as the Proton acceptor in the catalytic mechanism. The active-site Schiff-base intermediate with dihydroxyacetone-P is the Lys-212.

This sequence belongs to the class I fructose-bisphosphate aldolase family.

It carries out the reaction beta-D-fructose 1,6-bisphosphate = D-glyceraldehyde 3-phosphate + dihydroxyacetone phosphate. It participates in carbohydrate degradation; glycolysis; D-glyceraldehyde 3-phosphate and glycerone phosphate from D-glucose: step 4/4. This is Fructose-bisphosphate aldolase class 1 from Staphylococcus haemolyticus (strain JCSC1435).